A 70-amino-acid polypeptide reads, in one-letter code: NAD(P)H-quinone oxidoreductase subunit O (70 aa).

This sequence belongs to the complex I NdhO subunit family. In terms of assembly, NDH-1 can be composed of about 15 different subunits; different subcomplexes with different compositions have been identified which probably have different functions.

The protein resides in the cellular thylakoid membrane. It carries out the reaction a plastoquinone + NADH + (n+1) H(+)(in) = a plastoquinol + NAD(+) + n H(+)(out). It catalyses the reaction a plastoquinone + NADPH + (n+1) H(+)(in) = a plastoquinol + NADP(+) + n H(+)(out). Functionally, NDH-1 shuttles electrons from an unknown electron donor, via FMN and iron-sulfur (Fe-S) centers, to quinones in the respiratory and/or the photosynthetic chain. The immediate electron acceptor for the enzyme in this species is believed to be plastoquinone. Couples the redox reaction to proton translocation, and thus conserves the redox energy in a proton gradient. Cyanobacterial NDH-1 also plays a role in inorganic carbon-concentration. The polypeptide is NAD(P)H-quinone oxidoreductase subunit O (Trichormus variabilis (strain ATCC 29413 / PCC 7937) (Anabaena variabilis)).